Consider the following 462-residue polypeptide: MTVSDSSPNSPWHSFPRKVWRTGLKWIADLRVAIALLLLISVFSILGTVIEQGSTIQFYQENYPEDPALLGFLSWKVLLGLGLDHVYTTWWYLVLLLAFGVSLIACTFRRQLPALKTARNWNYYSQARQFNKLALSTELDHGSLQSLKPQLEKKRYKIFQDGEKLYARKGIVGRIGPIIVHIGMIVTLVGSIWGAFGGFMAQEMIPSGVNFKVNNVFKAGIFSESDRPWSVNVNRFWIDYTPTGDIDQFYSDLSVVDGEGQELERKTISVNHPLRYDGITFYQTSWSIGGVQVQLNNSPIFQLPAAQIPTENGAKLWGSWVPIKPDMSAGVSILMQDLQGSAIVYNEQGELVGAVRVGDRLDVGDISLKLVDLVGSTGLQIKADPGVPVVYTGFLLVMLGVVMSYVSYSQVWALAAGDRFYLGGKTNRAQVAFERELLEIINTLETSHSQATPENTLTSIEQ.

A run of 3 helical transmembrane segments spans residues 30-50 (LRVAIALLLLISVFSILGTVI), 89-109 (TWWYLVLLLAFGVSLIACTFR), and 175-195 (IGPIIVHIGMIVTLVGSIWGA).

This sequence belongs to the Ccs1/CcsB family. May interact with CcsA.

Its subcellular location is the cellular thylakoid membrane. Its function is as follows. Required during biogenesis of c-type cytochromes (cytochrome c6 and cytochrome f) at the step of heme attachment. The sequence is that of Cytochrome c biogenesis protein CcsB from Picosynechococcus sp. (strain ATCC 27264 / PCC 7002 / PR-6) (Agmenellum quadruplicatum).